We begin with the raw amino-acid sequence, 141 residues long: Nucleoside diphosphate kinase (141 aa).

ATP is bound by residues Lys-11, Phe-59, Arg-87, Thr-93, Arg-104, and Asn-114.

Belongs to the NDK family. Homotetramer. Requires Mg(2+) as cofactor.

The protein resides in the cytoplasm. The catalysed reaction is a 2'-deoxyribonucleoside 5'-diphosphate + ATP = a 2'-deoxyribonucleoside 5'-triphosphate + ADP. It catalyses the reaction a ribonucleoside 5'-diphosphate + ATP = a ribonucleoside 5'-triphosphate + ADP. Its function is as follows. Major role in the synthesis of nucleoside triphosphates other than ATP. The ATP gamma phosphate is transferred to the NDP beta phosphate via a ping-pong mechanism, using a phosphorylated active-site intermediate. The sequence is that of Nucleoside diphosphate kinase from Saccharophagus degradans (strain 2-40 / ATCC 43961 / DSM 17024).